Consider the following 213-residue polypeptide: Glutamine amidotransferase-like class 1 domain-containing protein 1 (213 aa).

The first 20 residues, 1-20 (MTSKPTCLIVASAASAGVSA), serve as a signal peptide directing secretion.

Belongs to the peptidase C56 family. As to quaternary structure, homotetramer. Component of the FERRY complex.

The protein resides in the secreted. It localises to the early endosome. Functionally, component of the FERRY complex (Five-subunit Endosomal Rab5 and RNA/ribosome intermediary). The FERRY complex directly interacts with mRNAs and RAB5A, and functions as a RAB5A effector involved in the localization and the distribution of specific mRNAs most likely by mediating their endosomal transport. The complex recruits mRNAs and ribosomes to early endosomes through direct mRNA-interaction. This Danio rerio (Zebrafish) protein is Glutamine amidotransferase-like class 1 domain-containing protein 1.